A 658-amino-acid polypeptide reads, in one-letter code: Exoribonuclease 2 (658 aa).

The RNB domain maps to 189 to 530; that stretch reads REDLTSLYFT…VNHRLIKQVL (342 aa). In terms of domain architecture, S1 motif spans 576–658; it reads AVEFDCEIAD…ETRSIVGNII (83 aa).

It belongs to the RNR ribonuclease family. RNase II subfamily.

It is found in the cytoplasm. It carries out the reaction Exonucleolytic cleavage in the 3'- to 5'-direction to yield nucleoside 5'-phosphates.. Its function is as follows. Involved in mRNA degradation. Hydrolyzes single-stranded polyribonucleotides processively in the 3' to 5' direction. This is Exoribonuclease 2 from Actinobacillus pleuropneumoniae serotype 3 (strain JL03).